Consider the following 305-residue polypeptide: Serine/threonine-protein kinase 16 (305 aa).

Gly-2 carries the N-myristoyl glycine lipid modification. Residues Cys-6 and Cys-8 are each lipidated (S-palmitoyl cysteine). A Protein kinase domain is found at 20 to 293 (YLFVQKLGEG…PVLLSQLEAL (274 aa)). Residues 26 to 34 (LGEGGFSYV) and Lys-49 each bind ATP. Asp-148 acts as the Proton acceptor in catalysis. Positions 166 to 202 (DLGSMNQACIQVEGSRQALALQDWAAQRCTISYRAPE) are activation loop. At Ser-197 the chain carries Phosphoserine; by autocatalysis. The residue at position 198 (Tyr-198) is a Phosphotyrosine; by autocatalysis.

It belongs to the protein kinase superfamily. Ser/Thr protein kinase family. As to quaternary structure, monomer. Interacts with DRG1 (via its N-terminal); the interaction phosphorylates DRG1. In terms of processing, mainly autophosphorylated on serine/threonine residues. Also autophosphorylated on Tyr-198. As to expression, expressed in heart, liver, brain, spleen, lung, skeletal muscle, kidney and testis.

It localises to the cytoplasm. The protein resides in the perinuclear region. The protein localises to the membrane. It catalyses the reaction L-seryl-[protein] + ATP = O-phospho-L-seryl-[protein] + ADP + H(+). It carries out the reaction L-threonyl-[protein] + ATP = O-phospho-L-threonyl-[protein] + ADP + H(+). The enzyme catalyses L-tyrosyl-[protein] + ATP = O-phospho-L-tyrosyl-[protein] + ADP + H(+). In terms of biological role, membrane-associated protein kinase that phosphorylates on serine and threonine residues. In vitro substrates include DRG1, ENO1 and EIF4EBP1. Also autophosphorylates. May be involved in secretory vesicle trafficking or intracellular signaling. May have a role in regulating stromal-epithelial interactions that occur during ductal morphogenesis in the mammary gland. May be involved in TGF-beta signaling. Able to autophosphorylate on Tyr residue; it is however unclear whether it has tyrosine-protein kinase toward other proteins. The protein is Serine/threonine-protein kinase 16 (Stk16) of Rattus norvegicus (Rat).